A 204-amino-acid polypeptide reads, in one-letter code: Proteasome subunit beta type-3 (204 aa).

It belongs to the peptidase T1B family. In terms of assembly, the 26S proteasome consists of a 20S proteasome core and two 19S regulatory subunits. The 20S proteasome core is composed of 28 subunits that are arranged in four stacked rings, resulting in a barrel-shaped structure. The two end rings are each formed by seven alpha subunits, and the two central rings are each formed by seven beta subunits. The catalytic chamber with the active sites is on the inside of the barrel.

It localises to the cytoplasm. It is found in the nucleus. Non-catalytic component of the proteasome, a multicatalytic proteinase complex which is characterized by its ability to cleave peptides with Arg, Phe, Tyr, Leu, and Glu adjacent to the leaving group at neutral or slightly basic pH. The proteasome has an ATP-dependent proteolytic activity. This chain is Proteasome subunit beta type-3 (PBC1), found in Picea mariana (Black spruce).